Reading from the N-terminus, the 518-residue chain is MWIIFLIIGLLVLGLLVLLIIAARYQRDYWRYLDIPHERPKKLWPIIRQIMTQTLSTEAMKAEHYSAIYKKFKGSGPFCGFYALLQPRALILDRELIRQIMIKDFWNFNDRGLYCNQKSDPLSGDLYALRGESWKEMRQKLDPSLEGDRMSLLYDCLYEEAEQLLLTVNSTLMSQPHSTVHIQKIMRRYVLSSLAKCVFGLNAEQRKTYPLEDFEQMTELALNSHKHGYLMNLMMIRFPNFCRMLRMRRTPKQAEEYFIKLLTSIVEQRETSGKPQKDYLQLLIDVKALEFITYQYEADKELGAHLQNELAAHADVFLKAGYEQTANTLSYVLYELALHPELQVRVREEVKKAIERHDGHITHEGIKSLSFMGQVINETLRMHPITPYILRRTLNDYAVPDHPKYILVKELFLIIPTHAIHHDPDIYPDPEEFKPDRWSGPRDSLQEQGTWFGFGVGARSCIGIQFAQLQLRLALALLLSEYEFSLNTRKPLINLEDGIALTLMPLGVIEPGNEERAV.

Cys461 serves as a coordination point for heme.

Belongs to the cytochrome P450 family. The cofactor is heme.

The protein localises to the endoplasmic reticulum membrane. It localises to the microsome membrane. May be involved in the metabolism of insect hormones and in the breakdown of synthetic insecticides. The polypeptide is Probable cytochrome P450 317a1 (Cyp317a1) (Drosophila melanogaster (Fruit fly)).